A 289-amino-acid chain; its full sequence is MVPELQKSTVRIQQPERVMGVIRAIKEQGCSKLQVISDFDMTLSRFGCNGRRCPTSHNILDNSHVISEDGKKKLKDLLHHYYPIEIDPNRTLEEKRPLMVEWWTRAHELLSQQKIQKGDIAQIVRESDVMLRDGFNELFDQLHKYSVPMFIFSAGVGDVLEEIIRQANVFYPNVNVVSNYMDFDDSGVLKCFKSPLIHTYNKNNSVLQGTAYFQQLSTRTSIILLGDSMGDLTMADGVPSVENILKIGFLNDKVEEQRGRYLDAYDIVLESDETLDVVNGILRYILMET.

Aspartate 38 functions as the Nucleophile in the catalytic mechanism. Aspartate 38 and aspartate 40 together coordinate Mg(2+). The Proton donor role is filled by aspartate 40. A CMP-binding site is contributed by glutamate 85. Glutamate 85 contributes to the N(7)-methyl-GMP binding site. Substrate-binding positions include 153 to 154 (SA) and lysine 202. Position 227 (aspartate 227) interacts with Mg(2+).

The protein belongs to the pyrimidine 5'-nucleotidase family. Monomer.

The protein resides in the cytoplasm. The catalysed reaction is N(7)-methyl-GMP + H2O = N(7)-methylguanosine + phosphate. It carries out the reaction CMP + H2O = cytidine + phosphate. It catalyses the reaction a ribonucleoside 5'-phosphate + H2O = a ribonucleoside + phosphate. Its function is as follows. Specifically hydrolyzes 7-methylguanosine monophosphate (m(7)GMP) to 7-methylguanosine and inorganic phosphate. The specific activity for m(7)GMP may protect cells against undesired salvage of m(7)GMP and its incorporation into nucleic acids. Also has weak activity for CMP. UMP and purine nucleotides are poor substrates. The polypeptide is 7-methylguanosine phosphate-specific 5'-nucleotidase (NT5C3B) (Gallus gallus (Chicken)).